The sequence spans 424 residues: MFIDTAKILVKSGNGGNGCISFRREKYVAMGGPNGGDGGNGGSVILVADRNLTTLLDFTYRRKYVADNGEDGGNSKCFGKKGEDLYIKVPIGTVVKDVETGKTMVDLAKEGDSYIVARGGKGGKGNYHFATPTRQAPNFAEPGMPGEERMINLEIKLLADVGLIGFPNVGKSTLLSMVSKAKPKIANYHFTTLKPNLGVVKIEGANAFVMADIPGIIEGASEGVGLGLDFLRHIERTRLLVHVVDISGVEGRNPIEDFKKINEELKNYSVKLWDRPQIVVANKIDMLYDEEVFETFKKEVNKLGFDKVFKISAATRDGVDDLIKEVTRQLSMIPITEMEIPEEERFMPEEKRFTYTIRVEDGVYVVEGSFVDRLLKSVNVNDPDSLRYFHKVLRNKGILDELKEMGIQDEDTVRLNDFEFDFLL.

The region spanning Met1–Leu158 is the Obg domain. In terms of domain architecture, OBG-type G spans Ala159–Ser331. Residues Gly165–Ser172, Phe190–Lys194, Asp212–Gly215, Asn282–Asp285, and Ser312–Ala314 contribute to the GTP site. Ser172 and Thr192 together coordinate Mg(2+). In terms of domain architecture, OCT spans Arg345–Leu424.

The protein belongs to the TRAFAC class OBG-HflX-like GTPase superfamily. OBG GTPase family. Monomer. It depends on Mg(2+) as a cofactor.

Its subcellular location is the cytoplasm. An essential GTPase which binds GTP, GDP and possibly (p)ppGpp with moderate affinity, with high nucleotide exchange rates and a fairly low GTP hydrolysis rate. Plays a role in control of the cell cycle, stress response, ribosome biogenesis and in those bacteria that undergo differentiation, in morphogenesis control. This chain is GTPase Obg, found in Clostridium novyi (strain NT).